We begin with the raw amino-acid sequence, 200 residues long: Large ribosomal subunit protein uL4 (200 aa).

The interval 38–68 (GRQGSKQQKTRSDVRGGGKRPWRQKGTGRAR) is disordered. The segment covering 54 to 65 (GGKRPWRQKGTG) has biased composition (basic residues).

This sequence belongs to the universal ribosomal protein uL4 family. In terms of assembly, part of the 50S ribosomal subunit.

Its function is as follows. One of the primary rRNA binding proteins, this protein initially binds near the 5'-end of the 23S rRNA. It is important during the early stages of 50S assembly. It makes multiple contacts with different domains of the 23S rRNA in the assembled 50S subunit and ribosome. Forms part of the polypeptide exit tunnel. This is Large ribosomal subunit protein uL4 from Pseudomonas savastanoi pv. phaseolicola (strain 1448A / Race 6) (Pseudomonas syringae pv. phaseolicola (strain 1448A / Race 6)).